The primary structure comprises 202 residues: Hypoxanthine-guanine phosphoribosyltransferase (202 aa).

The diphosphate site is built by Lys66 and Gly67. Residues Glu122 and Asp123 each coordinate Mg(2+). Asp126 acts as the Proton acceptor in catalysis. GMP-binding positions include Lys154, 175–176, and Asp182; that span reads FV. Diphosphate is bound at residue Arg188.

Belongs to the purine/pyrimidine phosphoribosyltransferase family. As to quaternary structure, homodimer and homotetramer in equilibrium. The presence or absence of divalent metal ions, as well as phosphate, can affect the oligomerization state of the enzyme. Likely functions as a tetramer (rather than a dimer) in its biological environment, which is the most active form. The dimeric structure is also active though ~50% of that of the tetramer. It depends on Mg(2+) as a cofactor.

The protein resides in the cytoplasm. The enzyme catalyses IMP + diphosphate = hypoxanthine + 5-phospho-alpha-D-ribose 1-diphosphate. It carries out the reaction GMP + diphosphate = guanine + 5-phospho-alpha-D-ribose 1-diphosphate. The protein operates within purine metabolism; IMP biosynthesis via salvage pathway; IMP from hypoxanthine: step 1/1. It functions in the pathway purine metabolism; GMP biosynthesis via salvage pathway; GMP from guanine: step 1/1. Its activity is regulated as follows. Competitively inhibited by acyclic nucleoside phosphonates (ANPs) with Ki values as low as 0.69 uM. Prodrugs of these compounds arrest the growth of a virulent strain of M.tuberculosis with MIC50 values as low as 4.5 uM and possess low cytotoxicity in mammalian cells. Inhibited by pyrrolidine nucleoside bisphosphonates, which are also able to arrest the growth of virulent M.tuberculosis not only in its replicating phase but also in its latent phase, and to arrest the growth of M.tuberculosis in infected macrophages while having low cytotoxicity in mammalian cells. In terms of biological role, purine salvage pathway enzyme that catalyzes the transfer of the ribosyl-5-phosphate group from 5-phospho-alpha-D-ribose 1-diphosphate (PRPP) to the N9 position of the 6-oxopurines hypoxanthine and guanine to form the corresponding ribonucleotides IMP (inosine 5'-monophosphate) and GMP (guanosine 5'-monophosphate), with the release of PPi. Thus, specifically recycles hypoxanthine and guanine imported from the external medium, and converts them to IMP and GMP, respectively. Cannot use xanthine as substrate. The polypeptide is Hypoxanthine-guanine phosphoribosyltransferase (Mycobacterium tuberculosis (strain ATCC 25618 / H37Rv)).